We begin with the raw amino-acid sequence, 197 residues long: Putative RING-H2 finger protein ATL71 (197 aa).

Residues 20–40 (MGGLAYGIGVSIGILMLITTI) form a helical membrane-spanning segment. Residues 53-80 (SASPTTTPRTRRRQRESNGTLPPGQERF) are disordered. The segment at 129 to 171 (CSICLADYKKMDMIRVLPDCNHLFHDNCVDPWLRLHPTCPVCR) adopts an RING-type; atypical zinc-finger fold.

It belongs to the RING-type zinc finger family. ATL subfamily.

It is found in the membrane. It catalyses the reaction S-ubiquitinyl-[E2 ubiquitin-conjugating enzyme]-L-cysteine + [acceptor protein]-L-lysine = [E2 ubiquitin-conjugating enzyme]-L-cysteine + N(6)-ubiquitinyl-[acceptor protein]-L-lysine.. Its pathway is protein modification; protein ubiquitination. The protein is Putative RING-H2 finger protein ATL71 (ATL71) of Arabidopsis thaliana (Mouse-ear cress).